A 500-amino-acid polypeptide reads, in one-letter code: Lysine--tRNA ligase (500 aa).

The Mg(2+) site is built by E410 and E417.

The protein belongs to the class-II aminoacyl-tRNA synthetase family. In terms of assembly, homodimer. It depends on Mg(2+) as a cofactor.

Its subcellular location is the cytoplasm. It carries out the reaction tRNA(Lys) + L-lysine + ATP = L-lysyl-tRNA(Lys) + AMP + diphosphate. The protein is Lysine--tRNA ligase of Pseudomonas putida (strain ATCC 700007 / DSM 6899 / JCM 31910 / BCRC 17059 / LMG 24140 / F1).